The chain runs to 295 residues: MNPASTSHATLQGLLRHARQRLEAAEVDAPRLSAEIILCHALSLRRIDIMLTPDRIVEEADCILFSELVARRATGEPLAYIVGEKEFFGRDFAVNPSTLIPRPETEHLIETALESLRSGPARFVDAGTGSGCIAVTLCAERADLSGLALDMSAPALATASHNARRHGVAQRLAFVRGDFTTSLLRSGSLDLYASNPPYISEAEYTGLSREVRDFEPRSALVPGDTGLEHAAAIIAEATRVLRPHGILLMEFGCMQGADMASLFTPYSTLWEMVEVRRDLAGLDRFIFARRNLLQP.

S-adenosyl-L-methionine-binding positions include 127–131 (GTGSG), Asp150, Phe179, and Asn195. 195 to 198 (NPPY) provides a ligand contact to substrate.

Belongs to the protein N5-glutamine methyltransferase family. PrmC subfamily.

It catalyses the reaction L-glutaminyl-[peptide chain release factor] + S-adenosyl-L-methionine = N(5)-methyl-L-glutaminyl-[peptide chain release factor] + S-adenosyl-L-homocysteine + H(+). Functionally, methylates the class 1 translation termination release factors RF1/PrfA and RF2/PrfB on the glutamine residue of the universally conserved GGQ motif. The protein is Release factor glutamine methyltransferase of Nitratidesulfovibrio vulgaris (strain ATCC 29579 / DSM 644 / CCUG 34227 / NCIMB 8303 / VKM B-1760 / Hildenborough) (Desulfovibrio vulgaris).